Consider the following 179-residue polypeptide: Large ribosomal subunit protein uL5 (179 aa).

The protein belongs to the universal ribosomal protein uL5 family. In terms of assembly, part of the 50S ribosomal subunit; part of the 5S rRNA/L5/L18/L25 subcomplex. Contacts the 5S rRNA and the P site tRNA. Forms a bridge to the 30S subunit in the 70S ribosome.

In terms of biological role, this is one of the proteins that bind and probably mediate the attachment of the 5S RNA into the large ribosomal subunit, where it forms part of the central protuberance. In the 70S ribosome it contacts protein S13 of the 30S subunit (bridge B1b), connecting the 2 subunits; this bridge is implicated in subunit movement. Contacts the P site tRNA; the 5S rRNA and some of its associated proteins might help stabilize positioning of ribosome-bound tRNAs. This Halalkalibacterium halodurans (strain ATCC BAA-125 / DSM 18197 / FERM 7344 / JCM 9153 / C-125) (Bacillus halodurans) protein is Large ribosomal subunit protein uL5.